The sequence spans 354 residues: Abasic site processing protein HMCES (354 aa).

Cysteine 2 functions as the Nucleophile in the catalytic mechanism. Cysteine 2 carries the post-translational modification Thiazolidine linkage to a ring-opened DNA abasic site. Glutamate 127 is a catalytic residue. Glycyl lysine isopeptide (Lys-Gly) (interchain with G-Cter in SUMO2) cross-links involve residues lysine 148 and lysine 151. Serine 160 is subject to Phosphoserine. Residue lysine 276 forms a Glycyl lysine isopeptide (Lys-Gly) (interchain with G-Cter in SUMO2) linkage. Residues alanine 292–glutamine 354 are disordered. Phosphoserine is present on serine 295. Residues proline 296–serine 309 are compositionally biased toward basic and acidic residues. A Glycyl lysine isopeptide (Lys-Gly) (interchain with G-Cter in SUMO2) cross-link involves residue lysine 306. Residue serine 322 is modified to Phosphoserine. The PIP-box signature appears at glycine 332–leucine 338. Residues tryptophan 337 to alanine 348 show a composition bias toward basic and acidic residues. Glycyl lysine isopeptide (Lys-Gly) (interchain with G-Cter in SUMO2) cross-links involve residues lysine 339 and lysine 342.

This sequence belongs to the SOS response-associated peptidase family. Interacts (via PIP-box motif) with PCNA. In terms of processing, ubiquitinated; the covalent HMCES DNA-protein cross-link is ubiquitinated, leading to its degradation by the proteasome.

It is found in the chromosome. Formation and reversal of DNA-protein cross-link depends on DNA context. Catalyzes formation of the thiazolidine linkage in presence of abasic sites in single-stranded DNA. Mediates the reversal of the thiazolidine cross-link in presence of double stranded DNA. Sensor of abasic sites in single-stranded DNA (ssDNA) required to preserve genome integrity by promoting error-free repair of abasic sites. Acts as an enzyme that recognizes and binds abasic sites in ssDNA at replication forks and chemically modifies the lesion by forming a covalent cross-link with DNA: forms a stable thiazolidine linkage between a ring-opened abasic site and the alpha-amino and sulfhydryl substituents of its N-terminal catalytic cysteine residue. Promotes error-free repair by protecting abasic sites from translesion synthesis (TLS) polymerases and endonucleases that are error-prone and would generate mutations and double-strand breaks. The HMCES DNA-protein cross-link is then either reversed or degraded. HMCES is able to catalyze the reversal of its thiazolidine cross-link and cycle between a cross-link and a non-cross-linked state depending on DNA context: mediates self-reversal of the thiazolidine cross-link in double stranded DNA, allowing APEX1 to initiate downstream repair of abasic sites. The HMCES DNA-protein cross-link can also be degraded by the SPRTN metalloprotease following unfolding by the BRIP1/FANCJ helicase. Has preference for ssDNA, but can also accommodate double-stranded DNA with 3' or 5' overhang (dsDNA), and dsDNA-ssDNA 3' junction. Plays a protective role during somatic hypermutation of immunoglobulin genes in B-cells: acts via its ability to form covalent cross-links with abasic sites, thereby limiting the accumulation of deletions in somatic hypermutation target regions. Also involved in class switch recombination (CSR) in B-cells independently of the formation of a DNA-protein cross-link: acts by binding and protecting ssDNA overhangs to promote DNA double-strand break repair through the microhomology-mediated alternative-end-joining (Alt-EJ) pathway. Acts as a protease: mediates autocatalytic processing of its N-terminal methionine in order to expose the catalytic cysteine. The polypeptide is Abasic site processing protein HMCES (Pongo abelii (Sumatran orangutan)).